A 330-amino-acid polypeptide reads, in one-letter code: Aspartate--ammonia ligase (330 aa).

Belongs to the class-II aminoacyl-tRNA synthetase family. AsnA subfamily.

The protein resides in the cytoplasm. It catalyses the reaction L-aspartate + NH4(+) + ATP = L-asparagine + AMP + diphosphate + H(+). The protein operates within amino-acid biosynthesis; L-asparagine biosynthesis; L-asparagine from L-aspartate (ammonia route): step 1/1. This Serratia proteamaculans (strain 568) protein is Aspartate--ammonia ligase.